The chain runs to 204 residues: MSVSMDHRVLALAGVAQALQQVRRIAETGHSEAATVRTAMDSVFRVDAASPEAVYGSAAALAPGLRLLHNYFRNQGQDEVLPRLALAVLQLERRFVRDASTVATVASGIDAAARQAQQLGDSSHPDVLGSLGGLYAQTISHLRPKVMVQGNPHYLGQAGVVAEIRALLLAALRSAVLWRQMGGSLWDFLFAKRAMIEAVDRALR.

The protein belongs to the HflD family.

The protein resides in the cytoplasm. Its subcellular location is the cell inner membrane. The protein is High frequency lysogenization protein HflD homolog of Xanthomonas axonopodis pv. citri (strain 306).